Reading from the N-terminus, the 769-residue chain is MKPENGAATWHPAKRSCLGRLTTLETLLLVFLGLLITALLSVLFLWLWVLDGYKTFTDGRPIYPLPFENSSVAVDRSAKNHNDVVCTSRECVRLAGFLAENLNSKINPCEDFYEFACGNYGLNKNLPANKPLRHTISDVQSRLNKQVKSMLQSPISANEKPWDKVAKGYYQKCLDEEELESTGVEAMRDIAKRIGGWPTLEGDKWQEWSHSWEEQIALVLNLTGVNAVILEMAVTHDPSNSSRSVIELDQPKWGAGSRYPYLSGANDPMLRNYTTLMKMTAVALGADPAIAEKEMNEAMEFELKLVNFSADDMVRRDPERGNNRFELWQLKSVFPFINFEKYLKTVFKELVALSPNHTVIVREIDYFVGIQHVLQSTPKRVLANYISWRLVQGFSPFLPPSAREPFYQFKANQTGMFNSPPPDRWEDCVTLSVIMMDMPVGRLFVENFFEKERAMKKMTELTSYLKNEFIKQLHVLDWMDEITRRRAISKANMIEYKSGFPMVLFNDTWMEKNWGMIIKPREYLLHLTIRVKLVRFTEELLRLDQPLDRSMWFQSPAQVDAYYAPNNNEMIFPAGIMQFPFLTLGVPNYITYGMVGAVIGHEVSHAFDDQGGQYDEMGNLNDWWDAETEEKFIEKTRCFVRQYENVHVVEADIHLNGQLSLGENIADNGGVKTAFNAYKAWKSNTTGISEPALPGFQNFTSQQMFFLAYANNWCSLVRPKHYIQIILTDVHAPSKYRAMIPLQNRPEFAKAFQCPIGSPMNPERKCQVW.

At 1–26 (MKPENGAATWHPAKRSCLGRLTTLET) the chain is on the cytoplasmic side. Residues 27-47 (LLLVFLGLLITALLSVLFLWL) form a helical; Signal-anchor for type II membrane protein membrane-spanning segment. Residues 48–769 (WVLDGYKTFT…MNPERKCQVW (722 aa)) lie on the Extracellular side of the membrane. An N-linked (GlcNAc...) asparagine glycan is attached at asparagine 69. The region spanning 85–769 (VCTSRECVRL…MNPERKCQVW (685 aa)) is the Peptidase M13 domain. Cystine bridges form between cysteine 86/cysteine 91, cysteine 109/cysteine 754, cysteine 117/cysteine 714, cysteine 173/cysteine 428, and cysteine 638/cysteine 766. N-linked (GlcNAc...) asparagine glycosylation is found at asparagine 221, asparagine 240, asparagine 272, asparagine 307, asparagine 356, asparagine 412, and asparagine 506. A Zn(2+)-binding site is contributed by histidine 601. Glutamate 602 is an active-site residue. The Zn(2+) site is built by histidine 605 and glutamate 663. Aspartate 667 functions as the Proton donor in the catalytic mechanism. N-linked (GlcNAc...) asparagine glycans are attached at residues asparagine 684 and asparagine 698.

The protein belongs to the peptidase M13 family. It depends on Zn(2+) as a cofactor.

The protein resides in the cell membrane. Probable cell surface protease. The polypeptide is Neprilysin-21 (nep-21) (Caenorhabditis elegans).